Reading from the N-terminus, the 146-residue chain is Hemoglobin subunit beta (146 aa).

Residues 2 to 146 enclose the Globin domain; that stretch reads QWTAEEKQLI…VAHALARKYH (145 aa). Positions 63 and 92 each coordinate heme b.

Belongs to the globin family. As to quaternary structure, heterotetramer of two alpha chains and two beta chains. Red blood cells.

Functionally, involved in oxygen transport from the lung to the various peripheral tissues. The chain is Hemoglobin subunit beta (HBB) from Turdus merula (Common blackbird).